The following is a 204-amino-acid chain: Large ribosomal subunit protein eL15 (204 aa).

The protein belongs to the eukaryotic ribosomal protein eL15 family. Component of the large ribosomal subunit.

The protein localises to the cytoplasm. Component of the large ribosomal subunit. The ribosome is a large ribonucleoprotein complex responsible for the synthesis of proteins in the cell. This is Large ribosomal subunit protein eL15 (rpl15) from Silurus asotus (Amur catfish).